The chain runs to 1025 residues: Leucyl-cystinyl aminopeptidase (1025 aa).

The residue at position 1 (M1) is an N-acetylmethionine. At 1–110 (MEPFTNDRLQ…GACSVPSART (110 aa)) the chain is on the cytoplasmic side. The Dileucine internalization motif signature appears at 53-54 (LL). Y70 is modified (phosphotyrosine). The Dileucine internalization motif signature appears at 76 to 77 (LL). Phosphoserine is present on residues S80 and S91. Residues 96-101 (RQSPDG) form a tankyrase binding region. The chain crosses the membrane as a helical; Signal-anchor for type II membrane protein span at residues 111–131 (MVVCAFVIVVAVSVIMVIYLL). At 132 to 1025 (PRCTFTKEGC…KNLKSLTWWL (894 aa)) the chain is on the extracellular side. N-linked (GlcNAc...) asparagine glycans are attached at residues N145, N184, N215, N256, and N266. E295 lines the substrate pocket. Residues N368 and N374 are each glycosylated (N-linked (GlcNAc...) asparagine). Residue 428 to 432 (GAMEN) participates in substrate binding. Residue N448 is glycosylated (N-linked (GlcNAc...) asparagine). Residue H464 participates in Zn(2+) binding. Residue E465 is the Proton acceptor of the active site. H468 and E487 together coordinate Zn(2+). N-linked (GlcNAc...) asparagine glycans are attached at residues N525, N578, N598, N664, N682, N760, N834, N850, and N989.

It belongs to the peptidase M1 family. As to quaternary structure, homodimer. Binds tankyrases 1 and 2. Zn(2+) serves as cofactor. The pregnancy serum form is derived from the membrane-bound form by proteolytic processing. Post-translationally, N-glycosylated. In terms of tissue distribution, highly expressed in placenta, heart, kidney and small intestine. Detected at lower levels in neuronal cells in the brain, in skeletal muscle, spleen, liver, testes and colon.

It is found in the cell membrane. The protein localises to the secreted. It carries out the reaction Release of an N-terminal amino acid, Cys-|-Xaa-, in which the half-cystine residue is involved in a disulfide loop, notably in oxytocin or vasopressin. Hydrolysis rates on a range of aminoacyl arylamides exceed that for the cystinyl derivative, however.. Release of an N-terminal amino acid, cleaves before cysteine, leucine as well as other amino acids. Degrades peptide hormones such as oxytocin, vasopressin and angiotensin III, and plays a role in maintaining homeostasis during pregnancy. May be involved in the inactivation of neuronal peptides in the brain. Cleaves Met-enkephalin and dynorphin. Binds angiotensin IV and may be the angiotensin IV receptor in the brain. The chain is Leucyl-cystinyl aminopeptidase (LNPEP) from Homo sapiens (Human).